A 199-amino-acid polypeptide reads, in one-letter code: Small ribosomal subunit protein uS4 (199 aa).

Residues 91-153 form the S4 RNA-binding domain; that stretch reads ARLDNVVYRM…SKNFVVIKEA (63 aa).

This sequence belongs to the universal ribosomal protein uS4 family. As to quaternary structure, part of the 30S ribosomal subunit. Contacts protein S5. The interaction surface between S4 and S5 is involved in control of translational fidelity.

Functionally, one of the primary rRNA binding proteins, it binds directly to 16S rRNA where it nucleates assembly of the body of the 30S subunit. With S5 and S12 plays an important role in translational accuracy. The protein is Small ribosomal subunit protein uS4 of Exiguobacterium sibiricum (strain DSM 17290 / CCUG 55495 / CIP 109462 / JCM 13490 / 255-15).